We begin with the raw amino-acid sequence, 257 residues long: Ethanolamine ammonia-lyase small subunit (257 aa).

The adenosylcob(III)alamin site is built by valine 153, glutamate 174, and cysteine 203.

This sequence belongs to the EutC family. In terms of assembly, the basic unit is a heterodimer which dimerizes to form tetramers. The heterotetramers trimerize; 6 large subunits form a core ring with 6 small subunits projecting outwards. It depends on adenosylcob(III)alamin as a cofactor.

It localises to the bacterial microcompartment. The enzyme catalyses ethanolamine = acetaldehyde + NH4(+). Its pathway is amine and polyamine degradation; ethanolamine degradation. Its function is as follows. Catalyzes the deamination of various vicinal amino-alcohols to oxo compounds. Allows this organism to utilize ethanolamine as the sole source of nitrogen and carbon in the presence of external vitamin B12. This is Ethanolamine ammonia-lyase small subunit from Rhodococcus erythropolis (Arthrobacter picolinophilus).